The chain runs to 420 residues: MDSVNNSSLPPSYTTTGRTYGHCLQMLTCLEPPCTATNGNGISNNRCLKCIVVTMCSIFSIAAHLAITLSCITLIQFIDQKIIYINCTIYAITGFLIAFIVRLTIKSSEVLTSIGKPAQFIFALISSIADTLITRNMLIDSNPSYVKILRAIEMTSLMCFVMLGAFIASYHYVCLATSGDLTWKAGFLILTAGTIIGISAPYGNISSLFGFLFLYTILAINVVRDASKALMNTCYYRICRATTLRHPSRLGCGRMSSTQDVNATHEEAISSADTIDGQIPMVVMSHATGVLIPVVIALQRYMTKKTVSLTSTDMLQGVCGVLVGASVSIFIPSRRDESLSRPIIILLSIIGAMAITLAGFGLVLGPTLFSACAAALSCYTCINIRNANKGIKQLAAAYVVKSILGFIITSLLVCILVALS.

Transmembrane regions (helical) follow at residues 58–78 (IFSIAAHLAITLSCITLIQFI), 81–101 (KIIYINCTIYAITGFLIAFIV), 114–134 (IGKPAQFIFALISSIADTLIT), 157–177 (LMCFVMLGAFIASYHYVCLAT), 181–201 (LTWKAGFLILTAGTIIGISAP), 203–223 (GNISSLFGFLFLYTILAINVV), 278–298 (QIPMVVMSHATGVLIPVVIAL), 312–332 (TDMLQGVCGVLVGASVSIFIP), 343–363 (IIILLSIIGAMAITLAGFGLV), 364–384 (LGPTLFSACAAALSCYTCINI), and 399–419 (VVKSILGFIITSLLVCILVAL).

It belongs to the alphaherpesvirinae HHV-1 UL43 family.

It is found in the host membrane. This Gallus gallus (Chicken) protein is Membrane protein UL43 homolog (MDV056).